Reading from the N-terminus, the 436-residue chain is Repulsive guidance molecule B (436 aa).

A signal peptide spans 1–48 (MGVRAAPSCAAAPAAAGAEQSRRPGLWPPSPPPPLLLLLLLSLGLLHA). Asparagine 123 carries an N-linked (GlcNAc...) asparagine glycan. 2 disulfide bridges follow: cysteine 142–cysteine 229 and cysteine 166–cysteine 315. A glycan (N-linked (GlcNAc...) asparagine) is linked at asparagine 386. Residue cysteine 415 is the site of GPI-anchor amidated cysteine attachment. A propeptide spans 416–436 (GGCRDLPVGLGLTCLILIMFL) (removed in mature form).

This sequence belongs to the repulsive guidance molecule (RGM) family. As to quaternary structure, homooligomer. Interacts with DRGX. Interacts with BMP2 and BMP4. Interacts with the BMP type I receptors ACVR1, BMPR1A and BMPR1B and with the BMP type II receptor ACVR2B. The functional complex with its receptor NEO1/neogenin appears to be a heterotetramer with a 2:2 stoichiometry, RGM molecules acting as staples that bring two NEO1 receptors together without interacting themselves, this arrangement leads to activation of downstream signaling via RhoA. Post-translationally, GPI-anchored. In terms of processing, autocatalytically cleaved at low pH; the two chains remain linked via two disulfide bonds. In terms of tissue distribution, detected in neonatal and adult dorsal root ganglion sensory neurons, spinal cord, and brain (at protein level). Also expressed at high levels in retinal ganglion cells of developing mouse, extending to the optic nerve (at protein level). Expressed in testis, epididymis, ovary, uterus, and pituitary.

The protein localises to the cell membrane. The protein resides in the membrane raft. Functionally, member of the repulsive guidance molecule (RGM) family that contributes to the patterning of the developing nervous system. Acts as a bone morphogenetic protein (BMP) coreceptor that potentiates BMP signaling. Promotes neuronal adhesion. May inhibit neurite outgrowth. This Mus musculus (Mouse) protein is Repulsive guidance molecule B.